A 181-amino-acid polypeptide reads, in one-letter code: Inner membrane-spanning protein YciB (181 aa).

5 helical membrane passes run 10–30 (LIIF…GALI), 50–70 (MQLI…ALHD), 80–100 (IVYV…KPAI), 120–140 (WAWV…AYHL), and 148–168 (FKVF…GGYI).

It belongs to the YciB family.

It localises to the cell inner membrane. Functionally, plays a role in cell envelope biogenesis, maintenance of cell envelope integrity and membrane homeostasis. The sequence is that of Inner membrane-spanning protein YciB from Vibrio cholerae serotype O1 (strain ATCC 39315 / El Tor Inaba N16961).